The following is a 448-amino-acid chain: Acyl-lipid (9-3)-desaturase (448 aa).

A Cytochrome b5 heme-binding domain is found at 6–90 (KKYITSDELK…LKDYSVSEVS (85 aa)). Heme is bound by residues histidine 41 and histidine 64. The next 2 membrane-spanning stretches (helical) occupy residues 112–132 (IMFA…YGVL) and 137–157 (VLVH…SGWI). The short motif at 159-163 (HDAGH) is the Histidine box-1 element. A helical transmembrane segment spans residues 172–192 (LNKFMGIFAANCLSGISIGWW). A Histidine box-2 motif is present at residues 196–200 (HNAHH). 3 helical membrane passes run 212–232 (LQYI…TSHF), 254–274 (FYPI…IMLL), and 286–306 (LLGC…LPNW). A Histidine box-3 motif is present at residues 373 to 377 (QIEHH).

Belongs to the fatty acid desaturase type 1 family.

The protein localises to the endoplasmic reticulum membrane. It catalyses the reaction (9Z,12Z,15Z)-octadecatrienoyl-containing glycerolipid + 2 Fe(II)-[cytochrome b5] + O2 + 2 H(+) = (6Z,9Z,12Z,15Z)-octadecatetraenoyl-containing glycerolipid + 2 Fe(III)-[cytochrome b5] + 2 H2O. The catalysed reaction is a (9Z,12Z)-octadecadienoyl-containing glycerolipid + 2 Fe(II)-[cytochrome b5] + O2 + 2 H(+) = (6Z,9Z,12Z)-octadecatrienoyl-containing glycerolipid + 2 Fe(III)-[cytochrome b5] + 2 H2O. Its pathway is lipid metabolism; polyunsaturated fatty acid biosynthesis. In terms of biological role, fatty acid desaturase able to introduce a delta(6)-double bond into delta(9)-unsaturated fatty-acid substrates. Can use both linoleic acid (18:2(9Z,12Z)) and alpha-linolenic acid (18:3(9Z,12Z,15Z)) as substrates. The polypeptide is Acyl-lipid (9-3)-desaturase (Borago officinalis (Bourrache)).